We begin with the raw amino-acid sequence, 281 residues long: 2-dehydro-3-deoxyphosphooctonate aldolase (281 aa).

It belongs to the KdsA family.

It is found in the cytoplasm. It catalyses the reaction D-arabinose 5-phosphate + phosphoenolpyruvate + H2O = 3-deoxy-alpha-D-manno-2-octulosonate-8-phosphate + phosphate. It participates in carbohydrate biosynthesis; 3-deoxy-D-manno-octulosonate biosynthesis; 3-deoxy-D-manno-octulosonate from D-ribulose 5-phosphate: step 2/3. It functions in the pathway bacterial outer membrane biogenesis; lipopolysaccharide biosynthesis. This Marinobacter nauticus (strain ATCC 700491 / DSM 11845 / VT8) (Marinobacter aquaeolei) protein is 2-dehydro-3-deoxyphosphooctonate aldolase.